A 156-amino-acid chain; its full sequence is ATP synthase subunit b (156 aa).

The chain crosses the membrane as a helical span at residues 11-31; that stretch reads AIAFFIFVVFCMKYVWPPLMA.

Belongs to the ATPase B chain family. As to quaternary structure, F-type ATPases have 2 components, F(1) - the catalytic core - and F(0) - the membrane proton channel. F(1) has five subunits: alpha(3), beta(3), gamma(1), delta(1), epsilon(1). F(0) has three main subunits: a(1), b(2) and c(10-14). The alpha and beta chains form an alternating ring which encloses part of the gamma chain. F(1) is attached to F(0) by a central stalk formed by the gamma and epsilon chains, while a peripheral stalk is formed by the delta and b chains.

The protein resides in the cell inner membrane. Functionally, f(1)F(0) ATP synthase produces ATP from ADP in the presence of a proton or sodium gradient. F-type ATPases consist of two structural domains, F(1) containing the extramembraneous catalytic core and F(0) containing the membrane proton channel, linked together by a central stalk and a peripheral stalk. During catalysis, ATP synthesis in the catalytic domain of F(1) is coupled via a rotary mechanism of the central stalk subunits to proton translocation. In terms of biological role, component of the F(0) channel, it forms part of the peripheral stalk, linking F(1) to F(0). The protein is ATP synthase subunit b of Aeromonas hydrophila subsp. hydrophila (strain ATCC 7966 / DSM 30187 / BCRC 13018 / CCUG 14551 / JCM 1027 / KCTC 2358 / NCIMB 9240 / NCTC 8049).